A 189-amino-acid chain; its full sequence is MSLTELILLAIGLSMDASAVSISNSLCIKKIKIKHILQMAVMFAVFQGIMPLIGYYAANSFENVIERFDHWIAFILLVIIGGKMIHESITADEEQDCSLFSLTFKLLLVQAVATSIDALAVGVSLSALNVDILYSITIIGIVTFICCTAAILLANRFGNLLGKRAGIVGGLILVGIGVKIFVQHMFFGG.

6 helical membrane-spanning segments follow: residues 2–22 (SLTELILLAIGLSMDASAVSI), 36–56 (ILQMAVMFAVFQGIMPLIGYY), 71–91 (WIAFILLVIIGGKMIHESITA), 106–126 (LLLVQAVATSIDALAVGVSLS), 132–152 (ILYSITIIGIVTFICCTAAIL), and 167–187 (IVGGLILVGIGVKIFVQHMFF).

Belongs to the MntP (TC 9.B.29) family.

The protein localises to the cell membrane. Functionally, probably functions as a manganese efflux pump. The polypeptide is Putative manganese efflux pump MntP (Ruminiclostridium cellulolyticum (strain ATCC 35319 / DSM 5812 / JCM 6584 / H10) (Clostridium cellulolyticum)).